The sequence spans 473 residues: 3-isopropylmalate dehydratase large subunit (473 aa).

[4Fe-4S] cluster-binding residues include cysteine 354, cysteine 414, and cysteine 417.

Belongs to the aconitase/IPM isomerase family. LeuC type 1 subfamily. Heterodimer of LeuC and LeuD. It depends on [4Fe-4S] cluster as a cofactor.

The enzyme catalyses (2R,3S)-3-isopropylmalate = (2S)-2-isopropylmalate. Its pathway is amino-acid biosynthesis; L-leucine biosynthesis; L-leucine from 3-methyl-2-oxobutanoate: step 2/4. In terms of biological role, catalyzes the isomerization between 2-isopropylmalate and 3-isopropylmalate, via the formation of 2-isopropylmaleate. This is 3-isopropylmalate dehydratase large subunit from Mycobacterium marinum (strain ATCC BAA-535 / M).